A 966-amino-acid polypeptide reads, in one-letter code: DNA mismatch repair protein MutS (966 aa).

709-716 (GPNMAGKS) provides a ligand contact to ATP. Residues 894–914 (EGQRPPSSPAQPPAPPAPVVV) are disordered. The segment covering 899 to 912 (PSSPAQPPAPPAPV) has biased composition (pro residues).

It belongs to the DNA mismatch repair MutS family.

In terms of biological role, this protein is involved in the repair of mismatches in DNA. It is possible that it carries out the mismatch recognition step. This protein has a weak ATPase activity. This is DNA mismatch repair protein MutS from Chloroflexus aurantiacus (strain ATCC 29366 / DSM 635 / J-10-fl).